A 302-amino-acid polypeptide reads, in one-letter code: AP-1 complex-associated regulatory protein (302 aa).

A Phosphoserine modification is found at Ser-29. The interaction with AP1G1 stretch occupies residues 78–138 (DSIAEKQKDL…ERQRIVQQYH (61 aa)). Residues 80-138 (IAEKQKDLDKKIQKELALQEEKLRLEEEALYAAQREAARAAKQRKLLEQERQRIVQQYH) are a coiled coil. Residues 188-206 (CDLMTKTKSTSGNDDSTSL) show a composition bias toward polar residues. A disordered region spans residues 188–258 (CDLMTKTKST…TSASDDSNGL (71 aa)). A sufficient for association with the Arp2/3 complex region spans residues 199–215 (GNDDSTSLDLEWEDEEG). Positions 221–233 (PMRERSKTEEDIL) are enriched in basic and acidic residues. Ser-226 is subject to Phosphoserine. Thr-228 carries the phosphothreonine modification. Residues 242–255 (KKTGSNPTSASDDS) show a composition bias toward polar residues.

Interacts (via coiled-coil domain) with AP1G1 (via GAE domain). Interacts with KIF5B. Associates with the Arp2/3 complex. Palmitoylated.

It is found in the golgi apparatus. The protein localises to the trans-Golgi network. Its subcellular location is the late endosome. It localises to the early endosome. Its function is as follows. Necessary for adaptor protein complex 1 (AP-1)-dependent transport between the trans-Golgi network and endosomes. Regulates the membrane association of AP1G1/gamma1-adaptin, one of the subunits of the AP-1 adaptor complex. The direct interaction with AP1G1/gamma1-adaptin attenuates the release of the AP-1 complex from membranes. Regulates endosomal membrane traffic via association with AP-1 and KIF5B thus linking kinesin-based plus-end-directed microtubular transport to AP-1-dependent membrane traffic. May act as effector of AP-1 in calcium-induced endo-lysosome secretion. Inhibits Arp2/3 complex function; negatively regulates cell spreading, size and motility via intracellular sequestration of the Arp2/3 complex. This chain is AP-1 complex-associated regulatory protein (AP1AR), found in Homo sapiens (Human).